The sequence spans 280 residues: Ribonuclease P protein subunit p38 (280 aa).

At Ala2 the chain carries N-acetylalanine. Residues Ser12, Ser221, and Ser230 each carry the phosphoserine modification. A disordered region spans residues 202-227 (WLPDRTQGPTDSLETEPSESQDNEIL). Acidic residues predominate over residues 214–226 (LETEPSESQDNEI). Residues 254–280 (QPLKIKKLIPNPSKIRKPPKSKKSISK) are disordered. A compositionally biased stretch (basic residues) spans 267–280 (KIRKPPKSKKSISK).

This sequence belongs to the eukaryotic ribosomal protein eL8 family. Component of nuclear RNase P and RNase MRP ribonucleoproteins. RNase P consists of a catalytic RNA moiety and about 10 protein subunits; POP1, POP4, POP5, POP7, RPP14, RPP21, RPP25, RPP30, RPP38 and RPP40. Within the RNase P complex, POP1, POP7 and RPP25 form the 'finger' subcomplex, POP5, RPP14, RPP40 and homodimeric RPP30 form the 'palm' subcomplex, and RPP21, POP4 and RPP38 form the 'wrist' subcomplex. All subunits of the RNase P complex interact with the catalytic RNA. Several subunits of RNase P are also part of the RNase MRP complex. RNase MRP consists of a catalytic RNA moiety and about 8 protein subunits; POP1, POP7, RPP25, RPP30, RPP38, RPP40 and possibly also POP4 and POP5.

The protein localises to the nucleus. The protein resides in the nucleolus. Its function is as follows. Component of ribonuclease P, a ribonucleoprotein complex that generates mature tRNA molecules by cleaving their 5'-ends. Also a component of the MRP ribonuclease complex, which cleaves pre-rRNA sequences. The protein is Ribonuclease P protein subunit p38 (Rpp38) of Mus musculus (Mouse).